Here is a 198-residue protein sequence, read N- to C-terminus: Probable chorismate pyruvate-lyase (198 aa).

Substrate is bound by residues Arg73, Leu111, and Glu172.

This sequence belongs to the UbiC family.

The protein resides in the cytoplasm. It catalyses the reaction chorismate = 4-hydroxybenzoate + pyruvate. The protein operates within cofactor biosynthesis; ubiquinone biosynthesis. Functionally, removes the pyruvyl group from chorismate, with concomitant aromatization of the ring, to provide 4-hydroxybenzoate (4HB) for the ubiquinone pathway. In Burkholderia orbicola (strain AU 1054), this protein is Probable chorismate pyruvate-lyase.